Reading from the N-terminus, the 629-residue chain is DNA-directed RNA polymerase subunit beta' (629 aa).

4 residues coordinate Zn(2+): cysteine 70, cysteine 72, cysteine 85, and cysteine 88. Residues aspartate 472, aspartate 474, and aspartate 476 each contribute to the Mg(2+) site.

This sequence belongs to the RNA polymerase beta' chain family. RpoC1 subfamily. As to quaternary structure, in plastids the minimal PEP RNA polymerase catalytic core is composed of four subunits: alpha, beta, beta', and beta''. When a (nuclear-encoded) sigma factor is associated with the core the holoenzyme is formed, which can initiate transcription. It depends on Mg(2+) as a cofactor. Zn(2+) serves as cofactor.

It localises to the plastid. It is found in the chloroplast. It catalyses the reaction RNA(n) + a ribonucleoside 5'-triphosphate = RNA(n+1) + diphosphate. Its function is as follows. DNA-dependent RNA polymerase catalyzes the transcription of DNA into RNA using the four ribonucleoside triphosphates as substrates. The polypeptide is DNA-directed RNA polymerase subunit beta' (Porphyra purpurea (Red seaweed)).